We begin with the raw amino-acid sequence, 162 residues long: Peptide methionine sulfoxide reductase MsrA (162 aa).

Cys-16 is a catalytic residue.

This sequence belongs to the MsrA Met sulfoxide reductase family.

It carries out the reaction L-methionyl-[protein] + [thioredoxin]-disulfide + H2O = L-methionyl-(S)-S-oxide-[protein] + [thioredoxin]-dithiol. The enzyme catalyses [thioredoxin]-disulfide + L-methionine + H2O = L-methionine (S)-S-oxide + [thioredoxin]-dithiol. Has an important function as a repair enzyme for proteins that have been inactivated by oxidation. Catalyzes the reversible oxidation-reduction of methionine sulfoxide in proteins to methionine. This is Peptide methionine sulfoxide reductase MsrA from Geobacter metallireducens (strain ATCC 53774 / DSM 7210 / GS-15).